A 569-amino-acid chain; its full sequence is MTVPSDITIAQNATLRPIVDIAKKIGLSADKIEPYGYYKAKINPNDVFDMPAKSSNSKLVLVTAINPTPAGEGKTTVTIGLADALNRVHHQDQNGKRTVVALREPSVGPVFGIKGGAAGGGYAQVLPMEDINLHFTGDLHAIGAANNLLAALIDNHIYQGNALNIDPKQVVWRRAVDMNDRQLRNTVTGLGKPADGVMREDGFDITVASEVMAIFCLATDLADLKQRLGNILVAYNQDKQPIYAKDLKAHGAMAALLKDAIKPNLVQTIEGTPAILHGGPFANIAHGCNSVIATRTAMHLADYTLTEAGFGADLGAEKFCDIKCRLAGLTPDAAVVVATIRALKYNGGAAKDALKNEDLTALEQGLPNLTKHIENLQEVFGLPVVVAINQFESDTAAEIEMVRKACKRLKVEVALTQVWEKGGAGGEDLARTLLALLETHNDQPQTFGFAYDSNKPIVNKIRTVAQRIYGANDVDISVTAAAKIKRLEALGLDKMPICIAKTQYSLSDDAKLLGRPTGFNIHVRDISVSNGAGFIVVICGPIMKMPGLPKYPSAENIDVDEKGNITGLF.

68-75 contacts ATP; that stretch reads TPAGEGKT.

The protein belongs to the formate--tetrahydrofolate ligase family.

The catalysed reaction is (6S)-5,6,7,8-tetrahydrofolate + formate + ATP = (6R)-10-formyltetrahydrofolate + ADP + phosphate. The protein operates within one-carbon metabolism; tetrahydrofolate interconversion. The protein is Formate--tetrahydrofolate ligase of Psychrobacter sp. (strain PRwf-1).